The sequence spans 285 residues: Small ribosomal subunit protein uS2 (285 aa).

The interval 229-285 (AGLASGDAKPEAGAGEPLAEWEQELLAQANPNAEGSAEAAPAAATEEAPAAQTPADF) is disordered. Low complexity predominate over residues 257-285 (ANPNAEGSAEAAPAAATEEAPAAQTPADF).

The protein belongs to the universal ribosomal protein uS2 family.

The chain is Small ribosomal subunit protein uS2 from Nocardia farcinica (strain IFM 10152).